The chain runs to 149 residues: Transcriptional repressor NrdR (149 aa).

A zinc finger lies at 3–34 (CPFCGHAATQVIDTRMSEEGDTVRRRRRCESC). The ATP-cone domain occupies 49–139 (PAVVKKNGSR…VYRSFEDVSE (91 aa)).

Belongs to the NrdR family. Zn(2+) serves as cofactor.

Its function is as follows. Negatively regulates transcription of bacterial ribonucleotide reductase nrd genes and operons by binding to NrdR-boxes. The sequence is that of Transcriptional repressor NrdR from Ralstonia nicotianae (strain ATCC BAA-1114 / GMI1000) (Ralstonia solanacearum).